Consider the following 198-residue polypeptide: tRNA (pseudouridine(54)-N(1))-methyltransferase (198 aa).

Leu-128 serves as a coordination point for S-adenosyl-L-methionine.

It belongs to the methyltransferase superfamily. TrmY family. Homodimer.

Its subcellular location is the cytoplasm. It carries out the reaction pseudouridine(54) in tRNA + S-adenosyl-L-methionine = N(1)-methylpseudouridine(54) in tRNA + S-adenosyl-L-homocysteine + H(+). In terms of biological role, specifically catalyzes the N1-methylation of pseudouridine at position 54 (Psi54) in tRNAs. The protein is tRNA (pseudouridine(54)-N(1))-methyltransferase of Natronomonas pharaonis (strain ATCC 35678 / DSM 2160 / CIP 103997 / JCM 8858 / NBRC 14720 / NCIMB 2260 / Gabara) (Halobacterium pharaonis).